We begin with the raw amino-acid sequence, 416 residues long: Serine hydroxymethyltransferase (416 aa).

(6S)-5,6,7,8-tetrahydrofolate-binding positions include Leu121 and 125-127; that span reads GHL. At Lys230 the chain carries N6-(pyridoxal phosphate)lysine. 354-356 is a (6S)-5,6,7,8-tetrahydrofolate binding site; sequence SPF.

The protein belongs to the SHMT family. In terms of assembly, homodimer. Requires pyridoxal 5'-phosphate as cofactor.

Its subcellular location is the cytoplasm. The catalysed reaction is (6R)-5,10-methylene-5,6,7,8-tetrahydrofolate + glycine + H2O = (6S)-5,6,7,8-tetrahydrofolate + L-serine. Its pathway is one-carbon metabolism; tetrahydrofolate interconversion. The protein operates within amino-acid biosynthesis; glycine biosynthesis; glycine from L-serine: step 1/1. Functionally, catalyzes the reversible interconversion of serine and glycine with tetrahydrofolate (THF) serving as the one-carbon carrier. This reaction serves as the major source of one-carbon groups required for the biosynthesis of purines, thymidylate, methionine, and other important biomolecules. Also exhibits THF-independent aldolase activity toward beta-hydroxyamino acids, producing glycine and aldehydes, via a retro-aldol mechanism. The polypeptide is Serine hydroxymethyltransferase (Prochlorococcus marinus (strain MIT 9211)).